The primary structure comprises 329 residues: MAQRHLWIWFLCLQTWSEAAGKDADPMVMNGILGESVTFLLNIQEPKKIDNIAWTSQSSVAFIKPGVNKAEVTITQGTYKGRIEIIDQKYDLVIRDLRMEDAGTYKADINEENEETITKIYYLHIYRRLKTPKITQSLISSLNNTCNITLTCSVEKEEKDVTYSWSPFGEKSNVLQIVHSPMDQKLTYTCTAQNPVSNSSDSVTVQQPCTDTPSFHPRHAVLPGGLAVLFLLILIPMLAFLFRLYKRRRDRIVLEADDVSKKTVYAVVSRNAQPTESRIYDEIPQSKMLSCKEDPVTTIYSSVQLSEKMKETNMKDRSLPKALGNEIVV.

Positions 1–21 (MAQRHLWIWFLCLQTWSEAAG) are cleaved as a signal peptide. The Extracellular portion of the chain corresponds to 22–221 (KDADPMVMNG…TPSFHPRHAV (200 aa)). In terms of domain architecture, Ig-like V-type spans 26-129 (PMVMNGILGE…IYYLHIYRRL (104 aa)). The Ig-like C2-type domain occupies 132 to 206 (PKITQSLISS…SNSSDSVTVQ (75 aa)). N-linked (GlcNAc...) asparagine glycosylation occurs at asparagine 147. The cysteines at positions 152 and 190 are disulfide-linked. The helical transmembrane segment at 222–242 (LPGGLAVLFLLILIPMLAFLF) threads the bilayer. The Cytoplasmic segment spans residues 243-329 (RLYKRRRDRI…PKALGNEIVV (87 aa)). Residues 263-268 (TVYAVV) carry the ITSM 1 motif. Tyrosine 265 is subject to Phosphotyrosine. Phosphotyrosine; by LYN is present on tyrosine 280. Residues 298–303 (TIYSSV) carry the ITSM 2 motif. Residue tyrosine 300 is modified to Phosphotyrosine.

In terms of assembly, homodimer; via its extracellular domain. Forms a head to tail dimer with a CD48 molecule from another cell. Interacts with SH2 domain-containing proteins SH2D1A/SAP and SH2D1B/EAT-2. Interacts with tyrosine-protein phosphatases PTPN6/SHP-1 and PTPN11/SHP-2 via its phosphorylated cytoplasmic domain, and this interaction is blocked by SH2D1A. Phosphorylated by tyrosine-protein kinase LCK on tyrosine residues following ligation induced by agonist monoclonal antibody. The association with SH2D1A/SAP is dependent of tyrosine phosphorylation of its cytoplasmic domain. Phosphorylated on Tyr-280 and Tyr-300 following platelet aggregation. Phosphorylated on tyrosine residues upon high affinity immunoglobulin epsilon receptor aggregation in mast cells. In terms of processing, N-glycosylated. In terms of tissue distribution, predominantly expressed in hematopoietic tissues such as lymph node, spleen, thymus, and bone marrow. Detected also in lung.

It localises to the cell membrane. Functionally, self-ligand receptor of the signaling lymphocytic activation molecule (SLAM) family. SLAM receptors triggered by homo- or heterotypic cell-cell interactions are modulating the activation and differentiation of a wide variety of immune cells and thus are involved in the regulation and interconnection of both innate and adaptive immune response. Activities are controlled by presence or absence of small cytoplasmic adapter proteins, SH2D1A/SAP and/or SH2D1B/EAT-2. Can mediate natural killer (NK) cell cytotoxicity dependent on SH2D1A and SH2D1B. Increases proliferative responses of activated T-cells and SH2D1A/SAP does not seen be required for this process. Homophilic interactions enhance interferon gamma/IFNG secretion in lymphocytes and induce platelet stimulation via a SH2D1A/SAP-dependent pathway. May serve as a marker for hematopoietic progenitor cells. Required for a prolonged T-cell:B-cell contact, optimal T follicular helper function, and germinal center formation. In germinal centers involved in maintaining B cell tolerance and in preventing autoimmunity. In mast cells negatively regulates high affinity immunoglobulin epsilon receptor signaling; independent of SH2D1A and SH2D1B but implicating FES and PTPN6/SHP-1. In macrophages enhances LPS-induced MAPK phosphorylation and NF-kappaB activation and modulates LPS-induced cytokine secretion; involving ITSM 2. Positively regulates macroautophagy in primary dendritic cells via stabilization of IRF8; inhibits TRIM21-mediated proteasomal degradation of IRF8. In Mus musculus (Mouse), this protein is SLAM family member 5 (Cd84).